Reading from the N-terminus, the 284-residue chain is MEMO1 family protein M1425_2054 (284 aa).

Belongs to the MEMO1 family.

In Saccharolobus islandicus (strain M.14.25 / Kamchatka #1) (Sulfolobus islandicus), this protein is MEMO1 family protein M1425_2054.